The following is a 229-amino-acid chain: Large ribosomal subunit protein uL1 (229 aa).

Belongs to the universal ribosomal protein uL1 family. In terms of assembly, part of the 50S ribosomal subunit.

Functionally, binds directly to 23S rRNA. The L1 stalk is quite mobile in the ribosome, and is involved in E site tRNA release. Its function is as follows. Protein L1 is also a translational repressor protein, it controls the translation of the L11 operon by binding to its mRNA. In Rhodopseudomonas palustris (strain HaA2), this protein is Large ribosomal subunit protein uL1.